Here is a 410-residue protein sequence, read N- to C-terminus: Peptidase T (410 aa).

Zn(2+) is bound at residue H78. D80 is a catalytic residue. Zn(2+) is bound at residue D140. E174 functions as the Proton acceptor in the catalytic mechanism. Zn(2+) is bound by residues E175, D197, and H379.

The protein belongs to the peptidase M20B family. Zn(2+) serves as cofactor.

The protein resides in the cytoplasm. The enzyme catalyses Release of the N-terminal residue from a tripeptide.. Cleaves the N-terminal amino acid of tripeptides. This Staphylococcus saprophyticus subsp. saprophyticus (strain ATCC 15305 / DSM 20229 / NCIMB 8711 / NCTC 7292 / S-41) protein is Peptidase T.